Reading from the N-terminus, the 227-residue chain is Cytochrome c oxidase subunit 2 (227 aa).

At methionine 1 to serine 14 the chain is on the mitochondrial intermembrane side. The chain crosses the membrane as a helical span at residues proline 15–methionine 45. Residues leucine 46–glutamine 59 lie on the Mitochondrial matrix side of the membrane. Residues glutamate 60–methionine 87 form a helical membrane-spanning segment. At aspartate 88–isoleucine 227 the chain is on the mitochondrial intermembrane side. Cu cation-binding residues include histidine 161, cysteine 196, glutamate 198, cysteine 200, histidine 204, and methionine 207. Glutamate 198 is a binding site for Mg(2+). Tyrosine 218 is subject to Phosphotyrosine.

It belongs to the cytochrome c oxidase subunit 2 family. As to quaternary structure, component of the cytochrome c oxidase (complex IV, CIV), a multisubunit enzyme composed of 14 subunits. The complex is composed of a catalytic core of 3 subunits MT-CO1, MT-CO2 and MT-CO3, encoded in the mitochondrial DNA, and 11 supernumerary subunits COX4I, COX5A, COX5B, COX6A, COX6B, COX6C, COX7A, COX7B, COX7C, COX8 and NDUFA4, which are encoded in the nuclear genome. The complex exists as a monomer or a dimer and forms supercomplexes (SCs) in the inner mitochondrial membrane with NADH-ubiquinone oxidoreductase (complex I, CI) and ubiquinol-cytochrome c oxidoreductase (cytochrome b-c1 complex, complex III, CIII), resulting in different assemblies (supercomplex SCI(1)III(2)IV(1) and megacomplex MCI(2)III(2)IV(2)). Found in a complex with TMEM177, COA6, COX18, COX20, SCO1 and SCO2. Interacts with TMEM177 in a COX20-dependent manner. Interacts with COX20. Interacts with COX16. Cu cation serves as cofactor.

It localises to the mitochondrion inner membrane. The catalysed reaction is 4 Fe(II)-[cytochrome c] + O2 + 8 H(+)(in) = 4 Fe(III)-[cytochrome c] + 2 H2O + 4 H(+)(out). In terms of biological role, component of the cytochrome c oxidase, the last enzyme in the mitochondrial electron transport chain which drives oxidative phosphorylation. The respiratory chain contains 3 multisubunit complexes succinate dehydrogenase (complex II, CII), ubiquinol-cytochrome c oxidoreductase (cytochrome b-c1 complex, complex III, CIII) and cytochrome c oxidase (complex IV, CIV), that cooperate to transfer electrons derived from NADH and succinate to molecular oxygen, creating an electrochemical gradient over the inner membrane that drives transmembrane transport and the ATP synthase. Cytochrome c oxidase is the component of the respiratory chain that catalyzes the reduction of oxygen to water. Electrons originating from reduced cytochrome c in the intermembrane space (IMS) are transferred via the dinuclear copper A center (CU(A)) of subunit 2 and heme A of subunit 1 to the active site in subunit 1, a binuclear center (BNC) formed by heme A3 and copper B (CU(B)). The BNC reduces molecular oxygen to 2 water molecules using 4 electrons from cytochrome c in the IMS and 4 protons from the mitochondrial matrix. This Leopoldamys sabanus (Long-tailed giant rat) protein is Cytochrome c oxidase subunit 2 (MT-CO2).